Here is a 206-residue protein sequence, read N- to C-terminus: Protein tyrosine phosphatase receptor type C-associated protein (206 aa).

A helical membrane pass occupies residues 34 to 54; it reads VTVVLLLLLLLLLATGLALAW. Residues 98–173 form a disordered region; it reads GSTDNDLERQ…PGPASAGGSA (76 aa). 2 positions are modified to phosphoserine: S99 and S153. Over residues 161-173 the composition is skewed to low complexity; that stretch reads LGSPGPASAGGSA.

In terms of assembly, interacts with CD45/PTPRC. Post-translationally, phosphorylated on tyrosine residues.

It localises to the membrane. The chain is Protein tyrosine phosphatase receptor type C-associated protein (PTPRCAP) from Homo sapiens (Human).